Here is a 324-residue protein sequence, read N- to C-terminus: Cyclin-dependent kinase 1 (324 aa).

In terms of domain architecture, Protein kinase spans 4–307 (YQKIEKIGEG…AKQACMHPYF (304 aa)). Residues 10–18 (IGEGTYGVV) and lysine 34 each bind ATP. Residue threonine 14 is modified to Phosphothreonine. Tyrosine 15 carries the post-translational modification Phosphotyrosine. Residue aspartate 148 is the Proton acceptor of the active site. Threonine 181 is subject to Phosphothreonine; by CAK.

This sequence belongs to the protein kinase superfamily. CMGC Ser/Thr protein kinase family. CDC2/CDKX subfamily. As to quaternary structure, forms a stable but non-covalent complex with a regulatory subunit (SUC1) and with a cyclin.

It carries out the reaction L-seryl-[protein] + ATP = O-phospho-L-seryl-[protein] + ADP + H(+). The catalysed reaction is L-threonyl-[protein] + ATP = O-phospho-L-threonyl-[protein] + ADP + H(+). Its activity is regulated as follows. Phosphorylation at Thr-14 or Tyr-15 inactivates the enzyme, while phosphorylation at Thr-181 activates it. Functionally, cyclin-dependent kinase that acts as a master regulator of the mitotic and meiotic cell cycles. The protein is Cyclin-dependent kinase 1 of Ajellomyces capsulatus (Darling's disease fungus).